Here is an 86-residue protein sequence, read N- to C-terminus: Sec-independent protein translocase protein TatA (86 aa).

Residues 1–21 (MGGISIWQLLIIAVIVVLLFG) form a helical membrane-spanning segment. Residues 42-86 (AIGDDNQPQQAQKTSSDADFETKNITEKQSVAQSETSESKNKEQV) form a disordered region. 2 stretches are compositionally biased toward polar residues: residues 47–58 (NQPQQAQKTSSD) and 68–77 (EKQSVAQSET).

Belongs to the TatA/E family. The Tat system comprises two distinct complexes: a TatABC complex, containing multiple copies of TatA, TatB and TatC subunits, and a separate TatA complex, containing only TatA subunits. Substrates initially bind to the TatABC complex, which probably triggers association of the separate TatA complex to form the active translocon.

It is found in the cell inner membrane. Functionally, part of the twin-arginine translocation (Tat) system that transports large folded proteins containing a characteristic twin-arginine motif in their signal peptide across membranes. TatA could form the protein-conducting channel of the Tat system. The polypeptide is Sec-independent protein translocase protein TatA (Photorhabdus laumondii subsp. laumondii (strain DSM 15139 / CIP 105565 / TT01) (Photorhabdus luminescens subsp. laumondii)).